Consider the following 95-residue polypeptide: Integration host factor subunit beta (95 aa).

The protein belongs to the bacterial histone-like protein family. As to quaternary structure, heterodimer of an alpha and a beta chain.

This protein is one of the two subunits of integration host factor, a specific DNA-binding protein that functions in genetic recombination as well as in transcriptional and translational control. The polypeptide is Integration host factor subunit beta (Colwellia psychrerythraea (strain 34H / ATCC BAA-681) (Vibrio psychroerythus)).